A 290-amino-acid chain; its full sequence is UPF0761 membrane protein YihY (290 aa).

Transmembrane regions (helical) follow at residues 44 to 64 (LLSL…FPMF), 104 to 124 (VGAC…DSAL), 140 to 160 (FAVY…SLAI), 183 to 203 (ILPL…VPTT), 210 to 230 (ALVG…GFAL), and 244 to 264 (VLAV…IVLL).

The protein belongs to the UPF0761 family.

Its subcellular location is the cell inner membrane. The sequence is that of UPF0761 membrane protein YihY from Salmonella agona (strain SL483).